The following is a 392-amino-acid chain: MTRPFNRVHLIVMDSVGIGEAPDAADFKDEGSHTLRHTLEGFDQTLPNLEKLGLGNIDKLPVVNAVEQPEAYYTKLSEASVGKDTMTGHWEIMGLNIMQPFKVYPNGFPEELIQQIEEMTGRKVVANKPASGTQIIDEWGEHQMKTGDLIVYTSADPVLQIAAHEDIIPLEELYDICEKVRELTKDPKYLIGRIIARPYVGEPGNFTRTSNRHDYALKPFGKTVLDHLKDGGYDVIAIGKINDIYDGEGVTEAVRTKSNMDGMDQLMKIVKKDFTGISFLNLVDFDALYGHRRDKPGYAQAIKDFDDRLPELFSNLKEDDLVIITADHGNDPTAPGTDHTREYIPVIMYSPKFKGGHALESDTTFSSIGATIADNFNVTLPEFGKSYLKELK.

Residues D14, D286, H291, D327, H328, and H339 each contribute to the Mn(2+) site.

This sequence belongs to the phosphopentomutase family. Requires Mn(2+) as cofactor.

It localises to the cytoplasm. The catalysed reaction is 2-deoxy-alpha-D-ribose 1-phosphate = 2-deoxy-D-ribose 5-phosphate. It carries out the reaction alpha-D-ribose 1-phosphate = D-ribose 5-phosphate. It functions in the pathway carbohydrate degradation; 2-deoxy-D-ribose 1-phosphate degradation; D-glyceraldehyde 3-phosphate and acetaldehyde from 2-deoxy-alpha-D-ribose 1-phosphate: step 1/2. Isomerase that catalyzes the conversion of deoxy-ribose 1-phosphate (dRib-1-P) and ribose 1-phosphate (Rib-1-P) to deoxy-ribose 5-phosphate (dRib-5-P) and ribose 5-phosphate (Rib-5-P), respectively. The protein is Phosphopentomutase of Staphylococcus aureus (strain Mu3 / ATCC 700698).